Here is a 357-residue protein sequence, read N- to C-terminus: Protein RecA (357 aa).

67-74 (GPESSGKT) serves as a coordination point for ATP. Residues 332-357 (PSAMSSSSSDDENSEGNVDFETGEVF) form a disordered region.

This sequence belongs to the RecA family.

The protein resides in the cytoplasm. In terms of biological role, can catalyze the hydrolysis of ATP in the presence of single-stranded DNA, the ATP-dependent uptake of single-stranded DNA by duplex DNA, and the ATP-dependent hybridization of homologous single-stranded DNAs. It interacts with LexA causing its activation and leading to its autocatalytic cleavage. This Shewanella sp. (strain ANA-3) protein is Protein RecA.